The following is a 290-amino-acid chain: 4-hydroxy-tetrahydrodipicolinate synthase (290 aa).

Residue Thr-45 coordinates pyruvate. Tyr-133 (proton donor/acceptor) is an active-site residue. Catalysis depends on Lys-161, which acts as the Schiff-base intermediate with substrate. Ile-202 is a pyruvate binding site.

It belongs to the DapA family. Homotetramer; dimer of dimers.

It localises to the cytoplasm. It catalyses the reaction L-aspartate 4-semialdehyde + pyruvate = (2S,4S)-4-hydroxy-2,3,4,5-tetrahydrodipicolinate + H2O + H(+). It functions in the pathway amino-acid biosynthesis; L-lysine biosynthesis via DAP pathway; (S)-tetrahydrodipicolinate from L-aspartate: step 3/4. Catalyzes the condensation of (S)-aspartate-beta-semialdehyde [(S)-ASA] and pyruvate to 4-hydroxy-tetrahydrodipicolinate (HTPA). This chain is 4-hydroxy-tetrahydrodipicolinate synthase, found in Alkalilimnicola ehrlichii (strain ATCC BAA-1101 / DSM 17681 / MLHE-1).